An 80-amino-acid chain; its full sequence is Serine protease inhibitor Kazal-type 6 (80 aa).

The first 23 residues, M1–S23, serve as a signal peptide directing secretion. The residue at position 24 (Q24) is a Pyrrolidone carboxylic acid. Positions Q24 to C80 constitute a Kazal-like domain. Cystine bridges form between C30–C62, C40–C59, and C48–C80.

Its subcellular location is the secreted. Functionally, serine protease inhibitor selective for kallikreins. Efficiently inhibits KLK4, KLK5, KLK6, KLK7, KLK12, KLK13 and KLK14. Doesn't inhibit KLK8. This Homo sapiens (Human) protein is Serine protease inhibitor Kazal-type 6 (SPINK6).